Here is a 131-residue protein sequence, read N- to C-terminus: Fumarate reductase subunit C (131 aa).

The next 3 membrane-spanning stretches (helical) occupy residues 30 to 50, 63 to 83, and 109 to 129; these read EGTAVPAVWFSIELIFGLFAL, FLQNPVIVIINLITLAAALLH, and IIKSLWAVTVVATIVILFVAL.

The protein belongs to the FrdC family. As to quaternary structure, part of an enzyme complex containing four subunits: a flavoprotein (FrdA), an iron-sulfur protein (FrdB), and two hydrophobic anchor proteins (FrdC and FrdD).

It localises to the cell inner membrane. Two distinct, membrane-bound, FAD-containing enzymes are responsible for the catalysis of fumarate and succinate interconversion; fumarate reductase is used in anaerobic growth, and succinate dehydrogenase is used in aerobic growth. Anchors the catalytic components of the fumarate reductase complex to the cell inner membrane, binds quinones. This Escherichia coli O17:K52:H18 (strain UMN026 / ExPEC) protein is Fumarate reductase subunit C.